The following is a 105-amino-acid chain: DRDAQTLTDERSDQGDGNFRYEFETSNGIYTQKTGTPGSEGQSNYQGSFRFPLEDGTIAEVSYIADEYGFQPSSDLLPVGPPAPPHVQRLLEIAEDQRRQGITFD.

Residues 1-21 (DRDAQTLTDERSDQGDGNFRY) form a disordered region. The Chitin-binding type R&amp;R domain occupies 16–81 (DGNFRYEFET…PSSDLLPVGP (66 aa)).

Arthrodial membrane.

The sequence is that of Cuticle protein AMP2 from Homarus americanus (American lobster).